The chain runs to 329 residues: Indolepyruvate C-methyltransferase (329 aa).

It belongs to the methyltransferase superfamily.

The enzyme catalyses indole-3-pyruvate + S-adenosyl-L-methionine = (R)-3-(indol-3-yl)-2-oxobutanoate + S-adenosyl-L-homocysteine + H(+). Strongly inhibited by the thiol reagents p-chloromercuribenzoate and N-ethylmaleimide. Partially inhibited by o-phenanthroline and 2,2'-dipyridyl. Competitively inhibited by L-tryptophan and indolmycin. Involved in the biosynthesis of the antibiotic indolmycin, an inhibitor of the bacterial tryptophan-tRNA synthetases. Catalyzes the transfer of a methyl group from S-adenosyl-L-methionine to position 3 of the aliphatic side chain of (indol-3-yl)pyruvate to yield 3-methylindolepyruvate. This is Indolepyruvate C-methyltransferase from Streptomyces griseus.